The chain runs to 113 residues: Iron-sulfur cluster insertion protein ErpA (113 aa).

C41, C105, and C107 together coordinate iron-sulfur cluster.

This sequence belongs to the HesB/IscA family. As to quaternary structure, homodimer. Iron-sulfur cluster is required as a cofactor.

Functionally, required for insertion of 4Fe-4S clusters for at least IspG. The protein is Iron-sulfur cluster insertion protein ErpA of Vibrio vulnificus (strain CMCP6).